The chain runs to 394 residues: Elongation factor Tu 1 (394 aa).

Positions 10 to 204 (KPHVNVGTIG…ALDNYIPEPE (195 aa)) constitute a tr-type G domain. The interval 19-26 (GHVDHGKT) is G1. Residue 19 to 26 (GHVDHGKT) coordinates GTP. T26 contacts Mg(2+). Positions 60–64 (GITIS) are G2. The tract at residues 81 to 84 (DCPG) is G3. GTP-binding positions include 81–85 (DCPGH) and 136–139 (NKCD). The tract at residues 136–139 (NKCD) is G4. A G5 region spans residues 174–176 (SAL).

This sequence belongs to the TRAFAC class translation factor GTPase superfamily. Classic translation factor GTPase family. EF-Tu/EF-1A subfamily. As to quaternary structure, monomer.

The protein localises to the cytoplasm. It carries out the reaction GTP + H2O = GDP + phosphate + H(+). Its function is as follows. GTP hydrolase that promotes the GTP-dependent binding of aminoacyl-tRNA to the A-site of ribosomes during protein biosynthesis. This chain is Elongation factor Tu 1, found in Photobacterium profundum (strain SS9).